The chain runs to 482 residues: Cobyrinate a,c-diamide synthase (482 aa).

Residues 248–441 enclose the GATase cobBQ-type domain; the sequence is RLAIAQDQAF…LHLHWGSQIS (194 aa). Cys-331 functions as the Nucleophile in the catalytic mechanism.

It belongs to the CobB/CbiA family. It depends on Mg(2+) as a cofactor.

The catalysed reaction is cob(II)yrinate + 2 L-glutamine + 2 ATP + 2 H2O = cob(II)yrinate a,c diamide + 2 L-glutamate + 2 ADP + 2 phosphate + 2 H(+). It participates in cofactor biosynthesis; adenosylcobalamin biosynthesis; cob(II)yrinate a,c-diamide from sirohydrochlorin (anaerobic route): step 10/10. Its function is as follows. Catalyzes the ATP-dependent amidation of the two carboxylate groups at positions a and c of cobyrinate, using either L-glutamine or ammonia as the nitrogen source. The protein is Cobyrinate a,c-diamide synthase of Synechocystis sp. (strain ATCC 27184 / PCC 6803 / Kazusa).